The sequence spans 117 residues: G antigen 1 (117 aa).

A disordered region spans residues 1–117 (MSWRGRSTYY…PEEGEGQSQC (117 aa)). 2 stretches are compositionally biased toward acidic residues: residues 32 to 45 (FSDE…EEGE) and 87 to 96 (ECEDGPDGQE).

The protein belongs to the GAGE family. Expressed in a variety of tumor tissues but not in normal tissues, except testis.

Functionally, antigen, recognized on melanoma by autologous cytolytic T-lymphocytes. The protein is G antigen 1 of Homo sapiens (Human).